Consider the following 253-residue polypeptide: Triosephosphate isomerase (253 aa).

Residue 8–10 (NWK) participates in substrate binding. His93 acts as the Electrophile in catalysis. Catalysis depends on Glu165, which acts as the Proton acceptor. Substrate is bound by residues Gly171, Ser210, and 231 to 232 (GG).

It belongs to the triosephosphate isomerase family. Homodimer.

The protein localises to the cytoplasm. It catalyses the reaction D-glyceraldehyde 3-phosphate = dihydroxyacetone phosphate. Its pathway is carbohydrate biosynthesis; gluconeogenesis. The protein operates within carbohydrate degradation; glycolysis; D-glyceraldehyde 3-phosphate from glycerone phosphate: step 1/1. Involved in the gluconeogenesis. Catalyzes stereospecifically the conversion of dihydroxyacetone phosphate (DHAP) to D-glyceraldehyde-3-phosphate (G3P). In Francisella tularensis subsp. holarctica (strain FTNF002-00 / FTA), this protein is Triosephosphate isomerase.